The primary structure comprises 200 residues: 3-isopropylmalate dehydratase small subunit (200 aa).

Belongs to the LeuD family. LeuD type 1 subfamily. Heterodimer of LeuC and LeuD.

It carries out the reaction (2R,3S)-3-isopropylmalate = (2S)-2-isopropylmalate. The protein operates within amino-acid biosynthesis; L-leucine biosynthesis; L-leucine from 3-methyl-2-oxobutanoate: step 2/4. In terms of biological role, catalyzes the isomerization between 2-isopropylmalate and 3-isopropylmalate, via the formation of 2-isopropylmaleate. This Pectobacterium carotovorum subsp. carotovorum (strain PC1) protein is 3-isopropylmalate dehydratase small subunit.